The following is a 103-amino-acid chain: Large ribosomal subunit protein bL21 (103 aa).

It belongs to the bacterial ribosomal protein bL21 family. Part of the 50S ribosomal subunit. Contacts protein L20.

Its function is as follows. This protein binds to 23S rRNA in the presence of protein L20. In Mycobacterium leprae (strain Br4923), this protein is Large ribosomal subunit protein bL21.